A 159-amino-acid chain; its full sequence is Small ribosomal subunit protein uS4 (159 aa).

Positions 106–158 (RRLQTIVYRMGLAKSIYHARQLIVHGHIAVAGRRVSSPGFLVPRELEDKISLI) constitute an S4 RNA-binding domain.

It belongs to the universal ribosomal protein uS4 family. In terms of assembly, part of the 30S ribosomal subunit. Contacts protein S5. The interaction surface between S4 and S5 is involved in control of translational fidelity.

One of the primary rRNA binding proteins, it binds directly to 16S rRNA where it nucleates assembly of the body of the 30S subunit. Functionally, with S5 and S12 plays an important role in translational accuracy. This chain is Small ribosomal subunit protein uS4, found in Pyrobaculum neutrophilum (strain DSM 2338 / JCM 9278 / NBRC 100436 / V24Sta) (Thermoproteus neutrophilus).